The sequence spans 238 residues: Ras association domain-containing protein 3 (238 aa).

S2 carries the post-translational modification N-acetylserine. Positions 26–48 (RAPQGKPRSGQQDVEKEKETHSY) are disordered. Positions 38–48 (DVEKEKETHSY) are enriched in basic and acidic residues. A Ras-associating domain is found at 79–186 (YTGFIKVQME…TLSFVLREHE (108 aa)). The 48-residue stretch at 187–234 (IGEWEAFSLPELQNFLRILDKEEDEQLQNLKRRYTAYRQKLEEALREV) folds into the SARAH domain.

In terms of tissue distribution, widely expressed.

It localises to the cytoplasm. The protein localises to the cytoskeleton. This is Ras association domain-containing protein 3 (RASSF3) from Homo sapiens (Human).